The sequence spans 315 residues: MIPAIFLMGPTASGKTELAVRLADALPIDIISVDSLLVYRHFDIGSAKPSLALRQQYPHALVDIREPDEPYSAGLFREDALHCIALARERGRIPLLVGGTGLYFRALECGIDTLPPANPALRQSLMALAETAGWPALHQRLATLDPEAAAGIAPHDRQRIQRALEIILGSGQTISGARHWQGTFPGPLYKIILRPPRSWLHQRITQRFDVMLNEGFLDEIADLSARHYAPELPAMRAVGYRQYFTWHDGLCSAAEAYQAALAATRQLAKRQDTWFKRESAHYYLDPSRDDASSLLLQMATRPRQGEVHSIGWDNG.

9–16 (GPTASGKT) is a binding site for ATP. A substrate-binding site is contributed by 11–16 (TASGKT). Interaction with substrate tRNA stretches follow at residues 34–37 (DSLL) and 158–162 (QRIQR).

It belongs to the IPP transferase family. Monomer. Mg(2+) is required as a cofactor.

The catalysed reaction is adenosine(37) in tRNA + dimethylallyl diphosphate = N(6)-dimethylallyladenosine(37) in tRNA + diphosphate. Catalyzes the transfer of a dimethylallyl group onto the adenine at position 37 in tRNAs that read codons beginning with uridine, leading to the formation of N6-(dimethylallyl)adenosine (i(6)A). The protein is tRNA dimethylallyltransferase of Acidithiobacillus ferrooxidans (strain ATCC 53993 / BNL-5-31) (Leptospirillum ferrooxidans (ATCC 53993)).